The sequence spans 30 residues: Protein Tat (30 aa).

The interval 1–30 (PLPTTRGNPTGPKESKKEVESKTETDPFAW) is disordered. A Cell attachment site motif is present at residues 6 to 8 (RGN). The segment covering 13–30 (KESKKEVESKTETDPFAW) has biased composition (basic and acidic residues).

The protein belongs to the lentiviruses Tat family. In terms of assembly, interacts with host CCNT1. Associates with the P-TEFb complex composed at least of Tat, P-TEFb (CDK9 and CCNT1), TAR RNA, RNA Pol II. Recruits the HATs CREBBP, TAF1/TFIID, EP300, PCAF and GCN5L2. Interacts with host KAT5/Tip60; this interaction targets the latter to degradation. Interacts with the host deacetylase SIRT1. Interacts with host capping enzyme RNGTT; this interaction stimulates RNGTT. Binds to host KDR, and to the host integrins ITGAV/ITGB3 and ITGA5/ITGB1. Interacts with host KPNB1/importin beta-1 without previous binding to KPNA1/importin alpha-1. Interacts with EIF2AK2. Interacts with host nucleosome assembly protein NAP1L1; this interaction may be required for the transport of Tat within the nucleus, since the two proteins interact at the nuclear rim. Interacts with host C1QBP/SF2P32; this interaction involves lysine-acetylated Tat. Interacts with the host chemokine receptors CCR2, CCR3 and CXCR4. Interacts with host DPP4/CD26; this interaction may trigger an anti-proliferative effect. Interacts with host LDLR. Interacts with the host extracellular matrix metalloproteinase MMP1. Interacts with host PRMT6; this interaction mediates Tat's methylation. Interacts with, and is ubiquitinated by MDM2/Hdm2. Interacts with host PSMC3 and HTATIP2. Interacts with STAB1; this interaction may overcome SATB1-mediated repression of IL2 and IL2RA (interleukin) in T cells by binding to the same domain than HDAC1. Interacts (when acetylated on Lys-50 and Lys-51) with human CDK13, thereby increasing HIV-1 mRNA splicing and promoting the production of the doubly spliced HIV-1 protein Nef. In terms of processing, acetylation by EP300, CREBBP, GCN5L2/GCN5 and PCAF regulates the transactivation activity of Tat. EP300-mediated acetylation of Lys-50 promotes dissociation of Tat from the TAR RNA through the competitive binding to PCAF's bromodomain. In addition, the non-acetylated Tat's N-terminus can also interact with PCAF. PCAF-mediated acetylation of Lys-28 enhances Tat's binding to CCNT1. Lys-50 is deacetylated by SIRT1. Phosphorylated by EIF2AK2 on serine and threonine residues adjacent to the basic region important for TAR RNA binding and function. Phosphorylation of Tat by EIF2AK2 is dependent on the prior activation of EIF2AK2 by dsRNA. Post-translationally, asymmetrical arginine methylation by host PRMT6 seems to diminish the transactivation capacity of Tat and affects the interaction with host CCNT1. In terms of processing, polyubiquitination by MDM2 does not target Tat to degradation, but activates its transactivation function and fosters interaction with CCNT1 and TAR RNA.

It localises to the host nucleus. It is found in the host nucleolus. The protein resides in the host cytoplasm. Its subcellular location is the secreted. Its function is as follows. Transcriptional activator that increases RNA Pol II processivity, thereby increasing the level of full-length viral transcripts. Recognizes a hairpin structure at the 5'-LTR of the nascent viral mRNAs referred to as the transactivation responsive RNA element (TAR) and recruits the cyclin T1-CDK9 complex (P-TEFb complex) that will in turn hyperphosphorylate the RNA polymerase II to allow efficient elongation. The CDK9 component of P-TEFb and other Tat-activated kinases hyperphosphorylate the C-terminus of RNA Pol II that becomes stabilized and much more processive. Other factors such as HTATSF1/Tat-SF1, SUPT5H/SPT5, and HTATIP2 are also important for Tat's function. Besides its effect on RNA Pol II processivity, Tat induces chromatin remodeling of proviral genes by recruiting the histone acetyltransferases (HATs) CREBBP, EP300 and PCAF to the chromatin. This also contributes to the increase in proviral transcription rate, especially when the provirus integrates in transcriptionally silent region of the host genome. To ensure maximal activation of the LTR, Tat mediates nuclear translocation of NF-kappa-B by interacting with host RELA. Through its interaction with host TBP, Tat may also modulate transcription initiation. Tat can reactivate a latently infected cell by penetrating in it and transactivating its LTR promoter. In the cytoplasm, Tat is thought to act as a translational activator of HIV-1 mRNAs. Functionally, extracellular circulating Tat can be endocytosed by surrounding uninfected cells via the binding to several surface receptors such as CD26, CXCR4, heparan sulfate proteoglycans (HSPG) or LDLR. Neurons are rarely infected, but they internalize Tat via their LDLR. Endosomal low pH allows Tat to cross the endosome membrane to enter the cytosol and eventually further translocate into the nucleus, thereby inducing severe cell dysfunctions ranging from cell activation to cell death. Through its interaction with nuclear HATs, Tat is potentially able to control the acetylation-dependent cellular gene expression. Tat seems to inhibit the HAT activity of KAT5/Tip60 and TAF1, and consequently modify the expression of specific cellular genes. Modulates the expression of many cellular genes involved in cell survival, proliferation or in coding for cytokines (such as IL10) or cytokine receptors. May be involved in the derepression of host interleukin IL2 expression. Mediates the activation of cyclin-dependent kinases and dysregulation of microtubule network. Tat plays a role in T-cell and neurons apoptosis. Tat induced neurotoxicity and apoptosis probably contribute to neuroAIDS. Host extracellular matrix metalloproteinase MMP1 cleaves Tat and decreases Tat's mediated neurotoxicity. Circulating Tat also acts as a chemokine-like and/or growth factor-like molecule that binds to specific receptors on the surface of the cells, affecting many cellular pathways. In the vascular system, Tat binds to ITGAV/ITGB3 and ITGA5/ITGB1 integrins dimers at the surface of endothelial cells and competes with bFGF for heparin-binding sites, leading to an excess of soluble bFGF. Binds to KDR/VEGFR-2. All these Tat-mediated effects enhance angiogenesis in Kaposi's sarcoma lesions. This Human immunodeficiency virus type 1 group M subtype A (isolate Z321) (HIV-1) protein is Protein Tat.